A 138-amino-acid polypeptide reads, in one-letter code: DNA-directed RNA polymerase subunit omega (138 aa).

The interval 104-138 (GNSDGLENSSNSRDDNPLGRDNFFSTPENRNNTNS) is disordered. Residues 126-138 (FFSTPENRNNTNS) are compositionally biased toward polar residues.

Belongs to the RNA polymerase subunit omega family. The RNAP catalytic core consists of 2 alpha, 1 beta, 1 beta' and 1 omega subunit. When a sigma factor is associated with the core the holoenzyme is formed, which can initiate transcription.

It carries out the reaction RNA(n) + a ribonucleoside 5'-triphosphate = RNA(n+1) + diphosphate. Promotes RNA polymerase assembly. Latches the N- and C-terminal regions of the beta' subunit thereby facilitating its interaction with the beta and alpha subunits. The polypeptide is DNA-directed RNA polymerase subunit omega (Ehrlichia chaffeensis (strain ATCC CRL-10679 / Arkansas)).